We begin with the raw amino-acid sequence, 721 residues long: mRNA (2'-O-methyladenosine-N(6)-)-methyltransferase (721 aa).

Composition is skewed to polar residues over residues 1–10 and 19–36; these read MTSENHTTIK and PTGS…TSKP. The segment at 1–37 is disordered; the sequence is MTSENHTTIKADSALVMSPTGSTSQAAPFSPSTSKPI. A WW domain is found at 43-77; sequence ELIQAGWSKCWSKRENRPYYFNRFTNQSLWEMPVL. The disordered stretch occupies residues 93 to 170; sequence PASGEANADA…KQGQASTPAP (78 aa). The span at 132 to 148 shows a compositional bias: low complexity; it reads IPATPTTPTVPISPSTP. The substrate site is built by Arg239 and Arg269. S-adenosyl-L-methionine is bound at residue 558 to 561; sequence NPPF. Substrate contacts are provided by residues Glu563 and 593–597; that span reads WRDPP. 619 to 621 serves as a coordination point for S-adenosyl-L-methionine; it reads FEH. Over residues 675-686 the composition is skewed to low complexity; that stretch reads SGRSLPSPGPSS. The tract at residues 675 to 721 is disordered; sequence SGRSLPSPGPSSTNTGEKDSKPAPERTAPSQDNSSPVDKTAQDTTNT. Over residues 702 to 721 the composition is skewed to polar residues; the sequence is APSQDNSSPVDKTAQDTTNT.

It belongs to the CAPAM family.

The protein resides in the nucleus. It catalyses the reaction a 5'-end (N(7)-methyl 5'-triphosphoguanosine)-(2'-O-methyladenosine) in mRNA + S-adenosyl-L-methionine = a 5'-end (N(7)-methyl 5'-triphosphoguanosine)-(N(6),2'-O-dimethyladenosine) in mRNA + S-adenosyl-L-homocysteine + H(+). Its activity is regulated as follows. Cap-specific adenosine methyltransferase activity is inhibited by zinc. Its function is as follows. Cap-specific adenosine methyltransferase that catalyzes formation of N(6),2'-O-dimethyladenosine cap (m6A(m)) by methylating the adenosine at the second transcribed position of capped mRNAs. In Danio rerio (Zebrafish), this protein is mRNA (2'-O-methyladenosine-N(6)-)-methyltransferase (pcif1).